Reading from the N-terminus, the 262-residue chain is Phosphatidylserine decarboxylase proenzyme (262 aa).

Catalysis depends on charge relay system; for autoendoproteolytic cleavage activity residues Asp-86, His-142, and Ser-226. The active-site Schiff-base intermediate with substrate; via pyruvic acid; for decarboxylase activity is the Ser-226. Position 226 is a pyruvic acid (Ser); by autocatalysis (Ser-226).

Belongs to the phosphatidylserine decarboxylase family. PSD-B subfamily. Prokaryotic type I sub-subfamily. As to quaternary structure, heterodimer of a large membrane-associated beta subunit and a small pyruvoyl-containing alpha subunit. Pyruvate serves as cofactor. Post-translationally, is synthesized initially as an inactive proenzyme. Formation of the active enzyme involves a self-maturation process in which the active site pyruvoyl group is generated from an internal serine residue via an autocatalytic post-translational modification. Two non-identical subunits are generated from the proenzyme in this reaction, and the pyruvate is formed at the N-terminus of the alpha chain, which is derived from the carboxyl end of the proenzyme. The autoendoproteolytic cleavage occurs by a canonical serine protease mechanism, in which the side chain hydroxyl group of the serine supplies its oxygen atom to form the C-terminus of the beta chain, while the remainder of the serine residue undergoes an oxidative deamination to produce ammonia and the pyruvoyl prosthetic group on the alpha chain. During this reaction, the Ser that is part of the protease active site of the proenzyme becomes the pyruvoyl prosthetic group, which constitutes an essential element of the active site of the mature decarboxylase.

Its subcellular location is the cell membrane. The catalysed reaction is a 1,2-diacyl-sn-glycero-3-phospho-L-serine + H(+) = a 1,2-diacyl-sn-glycero-3-phosphoethanolamine + CO2. It functions in the pathway phospholipid metabolism; phosphatidylethanolamine biosynthesis; phosphatidylethanolamine from CDP-diacylglycerol: step 2/2. In terms of biological role, catalyzes the formation of phosphatidylethanolamine (PtdEtn) from phosphatidylserine (PtdSer). In Bacillus anthracis, this protein is Phosphatidylserine decarboxylase proenzyme.